Consider the following 455-residue polypeptide: ATP-dependent protease ATPase subunit HslU (455 aa).

ATP is bound by residues Val23, 65–70, Asp266, Glu333, and Arg405; that span reads GVGKTE.

This sequence belongs to the ClpX chaperone family. HslU subfamily. As to quaternary structure, a double ring-shaped homohexamer of HslV is capped on each side by a ring-shaped HslU homohexamer. The assembly of the HslU/HslV complex is dependent on binding of ATP.

The protein resides in the cytoplasm. Its function is as follows. ATPase subunit of a proteasome-like degradation complex; this subunit has chaperone activity. The binding of ATP and its subsequent hydrolysis by HslU are essential for unfolding of protein substrates subsequently hydrolyzed by HslV. HslU recognizes the N-terminal part of its protein substrates and unfolds these before they are guided to HslV for hydrolysis. This Xanthomonas oryzae pv. oryzae (strain MAFF 311018) protein is ATP-dependent protease ATPase subunit HslU.